The chain runs to 535 residues: Hrp65 protein (535 aa).

The segment at 1–80 (MDVKAEAPNG…GMGPRGPMKN (80 aa)) is disordered. 2 stretches are compositionally biased toward low complexity: residues 27-42 (ENMN…QNNN) and 50-64 (NKRN…FQNR). Gly residues predominate over residues 65-74 (GGKGGPGMGP). RRM domains follow at residues 113 to 185 (NRLY…FAPN) and 187 to 268 (TTIR…TFDH). Disordered regions lie at residues 346–411 (EHET…RRQQ) and 429–535 (QEMN…RRRY). The span at 434 to 459 (QGGGGGGGNGGNGNNQGGGGNQGGGR) shows a compositional bias: gly residues. Residues 486-502 (GNQYQGNQHYQGNQDQG) show a composition bias toward low complexity. A compositionally biased stretch (basic and acidic residues) spans 521 to 535 (DRGHRDDFQNKRRRY).

It is found in the cytoplasm. The protein resides in the cytoskeleton. Its subcellular location is the nucleus. Component of nuclear connecting fibers associated with the transport of ribonucleoprotein particles from either the chromosome to the nuclear pore complex or their transient retention in the nucleoplasm. The polypeptide is Hrp65 protein (HRP65) (Chironomus tentans (Midge)).